The chain runs to 460 residues: Bifunctional protein GlmU (460 aa).

Residues 1–229 (MTNYAIILAA…FNESLGVNDR (229 aa)) are pyrophosphorylase. UDP-N-acetyl-alpha-D-glucosamine contacts are provided by residues 8–11 (LAAG), K22, Q72, and 77–78 (GT). D102 lines the Mg(2+) pocket. Residues G139, E154, N169, and N227 each coordinate UDP-N-acetyl-alpha-D-glucosamine. A Mg(2+)-binding site is contributed by N227. A linker region spans residues 230 to 250 (VALATAETVMRQRITQKHMVN). The interval 251 to 460 (GVTFQNPETV…RLAHHPSRSK (210 aa)) is N-acetyltransferase. The UDP-N-acetyl-alpha-D-glucosamine site is built by R332 and K350. Residue H362 is the Proton acceptor of the active site. 2 residues coordinate UDP-N-acetyl-alpha-D-glucosamine: Y365 and N376. Acetyl-CoA-binding positions include A379, 385–386 (NY), S404, A422, and R439.

The protein in the N-terminal section; belongs to the N-acetylglucosamine-1-phosphate uridyltransferase family. In the C-terminal section; belongs to the transferase hexapeptide repeat family. Homotrimer. The cofactor is Mg(2+).

Its subcellular location is the cytoplasm. The enzyme catalyses alpha-D-glucosamine 1-phosphate + acetyl-CoA = N-acetyl-alpha-D-glucosamine 1-phosphate + CoA + H(+). The catalysed reaction is N-acetyl-alpha-D-glucosamine 1-phosphate + UTP + H(+) = UDP-N-acetyl-alpha-D-glucosamine + diphosphate. Its pathway is nucleotide-sugar biosynthesis; UDP-N-acetyl-alpha-D-glucosamine biosynthesis; N-acetyl-alpha-D-glucosamine 1-phosphate from alpha-D-glucosamine 6-phosphate (route II): step 2/2. It participates in nucleotide-sugar biosynthesis; UDP-N-acetyl-alpha-D-glucosamine biosynthesis; UDP-N-acetyl-alpha-D-glucosamine from N-acetyl-alpha-D-glucosamine 1-phosphate: step 1/1. It functions in the pathway bacterial outer membrane biogenesis; LPS lipid A biosynthesis. In terms of biological role, catalyzes the last two sequential reactions in the de novo biosynthetic pathway for UDP-N-acetylglucosamine (UDP-GlcNAc). The C-terminal domain catalyzes the transfer of acetyl group from acetyl coenzyme A to glucosamine-1-phosphate (GlcN-1-P) to produce N-acetylglucosamine-1-phosphate (GlcNAc-1-P), which is converted into UDP-GlcNAc by the transfer of uridine 5-monophosphate (from uridine 5-triphosphate), a reaction catalyzed by the N-terminal domain. In Streptococcus pyogenes serotype M12 (strain MGAS9429), this protein is Bifunctional protein GlmU.